Here is a 291-residue protein sequence, read N- to C-terminus: ATP synthase gamma chain (291 aa).

It belongs to the ATPase gamma chain family. In terms of assembly, F-type ATPases have 2 components, CF(1) - the catalytic core - and CF(0) - the membrane proton channel. CF(1) has five subunits: alpha(3), beta(3), gamma(1), delta(1), epsilon(1). CF(0) has three main subunits: a, b and c.

Its subcellular location is the cell membrane. In terms of biological role, produces ATP from ADP in the presence of a proton gradient across the membrane. The gamma chain is believed to be important in regulating ATPase activity and the flow of protons through the CF(0) complex. The sequence is that of ATP synthase gamma chain from Streptococcus equi subsp. zooepidemicus (strain MGCS10565).